The primary structure comprises 234 residues: Phosphoribosylaminoimidazole-succinocarboxamide synthase (234 aa).

Belongs to the SAICAR synthetase family.

It catalyses the reaction 5-amino-1-(5-phospho-D-ribosyl)imidazole-4-carboxylate + L-aspartate + ATP = (2S)-2-[5-amino-1-(5-phospho-beta-D-ribosyl)imidazole-4-carboxamido]succinate + ADP + phosphate + 2 H(+). It participates in purine metabolism; IMP biosynthesis via de novo pathway; 5-amino-1-(5-phospho-D-ribosyl)imidazole-4-carboxamide from 5-amino-1-(5-phospho-D-ribosyl)imidazole-4-carboxylate: step 1/2. This chain is Phosphoribosylaminoimidazole-succinocarboxamide synthase, found in Streptococcus uberis (strain ATCC BAA-854 / 0140J).